Reading from the N-terminus, the 297-residue chain is Large ribosomal subunit protein uL18 (297 aa).

Glycine 2 bears the N-acetylglycine mark. N6-acetyllysine is present on residues lysine 5 and lysine 48. Serine 185 is subject to Phosphoserine. Lysine 220 bears the N6-acetyllysine; alternate mark. Residue lysine 220 forms a Glycyl lysine isopeptide (Lys-Gly) (interchain with G-Cter in SUMO1); alternate linkage. Lysine 220 participates in a covalent cross-link: Glycyl lysine isopeptide (Lys-Gly) (interchain with G-Cter in SUMO2); alternate. Residue threonine 232 is modified to Phosphothreonine. Residues 252-297 (VYEKKPKKEVKKKRWNRPKMSLAQKKDRVAQKKASFLRAQERAAES) form a disordered region. Basic residues predominate over residues 258–268 (KKEVKKKRWNR). Serine 272 is subject to Phosphoserine.

This sequence belongs to the universal ribosomal protein uL18 family. As to quaternary structure, component of the large ribosomal subunit (LSU). Part of the 5S RNP complex, which is a LSU subcomplex composed of the 5S RNA, RPL5 and RPL11. Component of a hexameric 5S RNP precursor complex, composed of 5S RNA, RRS1, RPF2/BXDC1, RPL5, RPL11 and HEATR3; this complex acts as a precursor for ribosome assembly. Interacts with NVL in an ATP-dependent manner. Interacts with RRP1B. Interacts with IPO5, IPO7 and KPNB1; these interactions may be involved in RPL5 nuclear import for the assembly of ribosomal subunits.

It is found in the cytoplasm. The protein localises to the nucleus. It localises to the nucleolus. Its function is as follows. Component of the ribosome, a large ribonucleoprotein complex responsible for the synthesis of proteins in the cell. The small ribosomal subunit (SSU) binds messenger RNAs (mRNAs) and translates the encoded message by selecting cognate aminoacyl-transfer RNA (tRNA) molecules. The large subunit (LSU) contains the ribosomal catalytic site termed the peptidyl transferase center (PTC), which catalyzes the formation of peptide bonds, thereby polymerizing the amino acids delivered by tRNAs into a polypeptide chain. The nascent polypeptides leave the ribosome through a tunnel in the LSU and interact with protein factors that function in enzymatic processing, targeting, and the membrane insertion of nascent chains at the exit of the ribosomal tunnel. As part of the 5S RNP/5S ribonucleoprotein particle it is an essential component of the LSU, required for its formation and the maturation of rRNAs. It also couples ribosome biogenesis to p53/TP53 activation. As part of the 5S RNP it accumulates in the nucleoplasm and inhibits MDM2, when ribosome biogenesis is perturbed, mediating the stabilization and the activation of TP53. The polypeptide is Large ribosomal subunit protein uL18 (RPL5) (Bos taurus (Bovine)).